We begin with the raw amino-acid sequence, 121 residues long: Flagellar protein FliT (121 aa).

Residues 1 to 50 (MNHAPHLYFAWQQLVEKSQLMLRLATEEQWDELIASEMAYVNAVQEIAHL) are required for homodimerization. The fliD binding stretch occupies residues 60 to 98 (MQEQLRPMLRLILDNESKVKQLLQIRMDELAKLVGQSSV).

This sequence belongs to the FliT family. Homodimer. Interacts with FliD and FlhC.

Its subcellular location is the cytoplasm. The protein localises to the cytosol. Its function is as follows. Dual-function protein that regulates the transcription of class 2 flagellar operons and that also acts as an export chaperone for the filament-capping protein FliD. As a transcriptional regulator, acts as an anti-FlhDC factor; it directly binds FlhC, thus inhibiting the binding of the FlhC/FlhD complex to class 2 promoters, resulting in decreased expression of class 2 flagellar operons. As a chaperone, effects FliD transition to the membrane by preventing its premature polymerization, and by directing it to the export apparatus. This is Flagellar protein FliT from Escherichia coli O139:H28 (strain E24377A / ETEC).